A 129-amino-acid polypeptide reads, in one-letter code: Lysozyme C, milk isozyme (129 aa).

A C-type lysozyme domain is found at 1 to 129 (KIFSKCELAR…LSKYLASCNL (129 aa)). 4 disulfides stabilise this stretch: C6–C127, C30–C115, C65–C80, and C76–C94. Catalysis depends on residues E35 and D53. Ca(2+) contacts are provided by K82, D85, N87, D90, and D91.

Belongs to the glycosyl hydrolase 22 family. Monomer. It depends on Ca(2+) as a cofactor.

It catalyses the reaction Hydrolysis of (1-&gt;4)-beta-linkages between N-acetylmuramic acid and N-acetyl-D-glucosamine residues in a peptidoglycan and between N-acetyl-D-glucosamine residues in chitodextrins.. In terms of biological role, lysozymes have primarily a bacteriolytic function; those in tissues and body fluids are associated with the monocyte-macrophage system and enhance the activity of immunoagents. This Canis lupus familiaris (Dog) protein is Lysozyme C, milk isozyme.